Consider the following 93-residue polypeptide: Large ribosomal subunit protein uL23 (93 aa).

This sequence belongs to the universal ribosomal protein uL23 family. Part of the 50S ribosomal subunit. Contacts protein L29, and trigger factor when it is bound to the ribosome.

In terms of biological role, one of the early assembly proteins it binds 23S rRNA. One of the proteins that surrounds the polypeptide exit tunnel on the outside of the ribosome. Forms the main docking site for trigger factor binding to the ribosome. In Sulfurovum sp. (strain NBC37-1), this protein is Large ribosomal subunit protein uL23.